The primary structure comprises 232 residues: Phosphatidylserine decarboxylase proenzyme (232 aa).

The active-site Schiff-base intermediate with substrate; via pyruvic acid is Ser190. Residue Ser190 is modified to Pyruvic acid (Ser); by autocatalysis.

Belongs to the phosphatidylserine decarboxylase family. PSD-A subfamily. In terms of assembly, heterodimer of a large membrane-associated beta subunit and a small pyruvoyl-containing alpha subunit. The cofactor is pyruvate. In terms of processing, is synthesized initially as an inactive proenzyme. Formation of the active enzyme involves a self-maturation process in which the active site pyruvoyl group is generated from an internal serine residue via an autocatalytic post-translational modification. Two non-identical subunits are generated from the proenzyme in this reaction, and the pyruvate is formed at the N-terminus of the alpha chain, which is derived from the carboxyl end of the proenzyme. The post-translation cleavage follows an unusual pathway, termed non-hydrolytic serinolysis, in which the side chain hydroxyl group of the serine supplies its oxygen atom to form the C-terminus of the beta chain, while the remainder of the serine residue undergoes an oxidative deamination to produce ammonia and the pyruvoyl prosthetic group on the alpha chain.

The protein resides in the cell membrane. It catalyses the reaction a 1,2-diacyl-sn-glycero-3-phospho-L-serine + H(+) = a 1,2-diacyl-sn-glycero-3-phosphoethanolamine + CO2. It functions in the pathway phospholipid metabolism; phosphatidylethanolamine biosynthesis; phosphatidylethanolamine from CDP-diacylglycerol: step 2/2. In terms of biological role, catalyzes the formation of phosphatidylethanolamine (PtdEtn) from phosphatidylserine (PtdSer). This is Phosphatidylserine decarboxylase proenzyme from Allorhizobium ampelinum (strain ATCC BAA-846 / DSM 112012 / S4) (Agrobacterium vitis (strain S4)).